A 96-amino-acid chain; its full sequence is Small ribosomal subunit protein bS6 (96 aa).

This sequence belongs to the bacterial ribosomal protein bS6 family.

Binds together with bS18 to 16S ribosomal RNA. This is Small ribosomal subunit protein bS6 from Streptococcus suis (strain 98HAH33).